Here is a 390-residue protein sequence, read N- to C-terminus: Formate-dependent phosphoribosylglycinamide formyltransferase (390 aa).

Residues 18–19 (EL) and glutamate 78 each bind N(1)-(5-phospho-beta-D-ribosyl)glycinamide. Residues arginine 110, lysine 151, 156–161 (SSGKGQ), 191–194 (EEFL), and glutamate 199 contribute to the ATP site. The ATP-grasp domain occupies 115–305 (DLASKELNIK…EFELHLRAFL (191 aa)). Mg(2+)-binding residues include glutamate 264 and glutamate 276. N(1)-(5-phospho-beta-D-ribosyl)glycinamide contacts are provided by residues aspartate 283, lysine 353, and 360 to 361 (RR).

This sequence belongs to the PurK/PurT family. In terms of assembly, homodimer.

The enzyme catalyses N(1)-(5-phospho-beta-D-ribosyl)glycinamide + formate + ATP = N(2)-formyl-N(1)-(5-phospho-beta-D-ribosyl)glycinamide + ADP + phosphate + H(+). The protein operates within purine metabolism; IMP biosynthesis via de novo pathway; N(2)-formyl-N(1)-(5-phospho-D-ribosyl)glycinamide from N(1)-(5-phospho-D-ribosyl)glycinamide (formate route): step 1/1. Its function is as follows. Involved in the de novo purine biosynthesis. Catalyzes the transfer of formate to 5-phospho-ribosyl-glycinamide (GAR), producing 5-phospho-ribosyl-N-formylglycinamide (FGAR). Formate is provided by PurU via hydrolysis of 10-formyl-tetrahydrofolate. In Prochlorococcus marinus (strain MIT 9515), this protein is Formate-dependent phosphoribosylglycinamide formyltransferase.